Here is a 182-residue protein sequence, read N- to C-terminus: Large ribosomal subunit protein uL5 (182 aa).

It belongs to the universal ribosomal protein uL5 family. Part of the 50S ribosomal subunit; part of the 5S rRNA/L5/L18/L25 subcomplex. Contacts the 5S rRNA and the P site tRNA. Forms a bridge to the 30S subunit in the 70S ribosome.

In terms of biological role, this is one of the proteins that bind and probably mediate the attachment of the 5S RNA into the large ribosomal subunit, where it forms part of the central protuberance. In the 70S ribosome it contacts protein S13 of the 30S subunit (bridge B1b), connecting the 2 subunits; this bridge is implicated in subunit movement. Contacts the P site tRNA; the 5S rRNA and some of its associated proteins might help stabilize positioning of ribosome-bound tRNAs. This is Large ribosomal subunit protein uL5 from Coxiella burnetii (strain CbuG_Q212) (Coxiella burnetii (strain Q212)).